The chain runs to 374 residues: Chaperone protein DnaJ (374 aa).

The J domain occupies 5-71 (DLYAILGVCR…QKRASYDRFG (67 aa)). A CR-type zinc finger spans residues 132 to 210 (GVEKQIRIAT…CQGTGRVKDT (79 aa)). Positions 145, 148, 162, 165, 184, 187, 198, and 201 each coordinate Zn(2+). CXXCXGXG motif repeat units follow at residues 145–152 (CGECHGSG), 162–169 (CPTCNGAG), 184–191 (CPTCHGRG), and 198–205 (CNKCQGTG).

It belongs to the DnaJ family. Homodimer. Zn(2+) is required as a cofactor.

The protein localises to the cytoplasm. Functionally, participates actively in the response to hyperosmotic and heat shock by preventing the aggregation of stress-denatured proteins and by disaggregating proteins, also in an autonomous, DnaK-independent fashion. Unfolded proteins bind initially to DnaJ; upon interaction with the DnaJ-bound protein, DnaK hydrolyzes its bound ATP, resulting in the formation of a stable complex. GrpE releases ADP from DnaK; ATP binding to DnaK triggers the release of the substrate protein, thus completing the reaction cycle. Several rounds of ATP-dependent interactions between DnaJ, DnaK and GrpE are required for fully efficient folding. Also involved, together with DnaK and GrpE, in the DNA replication of plasmids through activation of initiation proteins. This is Chaperone protein DnaJ from Dichelobacter nodosus (strain VCS1703A).